Here is an 843-residue protein sequence, read N- to C-terminus: Leucine--tRNA ligase (843 aa).

Residues 61–71 (PYPSGDLHMGH) carry the 'HIGH' region motif. Positions 606 to 610 (AMSKS) match the 'KMSKS' region motif. Residue Lys-609 coordinates ATP.

Belongs to the class-I aminoacyl-tRNA synthetase family.

The protein localises to the cytoplasm. It carries out the reaction tRNA(Leu) + L-leucine + ATP = L-leucyl-tRNA(Leu) + AMP + diphosphate. In Arthrobacter sp. (strain FB24), this protein is Leucine--tRNA ligase.